The following is a 780-amino-acid chain: Putative ABC transporter ATP-binding protein BL0043 (780 aa).

ABC transporter domains follow at residues 2-238 (LKDI…QSET) and 282-531 (IRVS…GPAH). 34 to 41 (GPNGSGKS) lines the ATP pocket. A disordered region spans residues 230–272 (AEAVSQSETEGSIGTEAAPSRPTNDSPRQREREDGSELPLLSD). Residue 316–323 (GVNGSGKS) participates in ATP binding. 4 helical membrane-spanning segments follow: residues 551–573 (FTMF…LAVI), 586–608 (SIHP…VRTG), 623–645 (GVTI…AVFL), and 759–778 (IAAR…AAII).

Belongs to the ABC transporter superfamily.

Its subcellular location is the cell membrane. Functionally, probably part of an ABC transporter complex. Responsible for energy coupling to the transport system. This is Putative ABC transporter ATP-binding protein BL0043 from Bifidobacterium longum (strain NCC 2705).